Reading from the N-terminus, the 243-residue chain is 3-deoxy-manno-octulosonate cytidylyltransferase (243 aa).

It belongs to the KdsB family.

It is found in the cytoplasm. It carries out the reaction 3-deoxy-alpha-D-manno-oct-2-ulosonate + CTP = CMP-3-deoxy-beta-D-manno-octulosonate + diphosphate. Its pathway is nucleotide-sugar biosynthesis; CMP-3-deoxy-D-manno-octulosonate biosynthesis; CMP-3-deoxy-D-manno-octulosonate from 3-deoxy-D-manno-octulosonate and CTP: step 1/1. It participates in bacterial outer membrane biogenesis; lipopolysaccharide biosynthesis. Activates KDO (a required 8-carbon sugar) for incorporation into bacterial lipopolysaccharide in Gram-negative bacteria. This Bartonella tribocorum (strain CIP 105476 / IBS 506) protein is 3-deoxy-manno-octulosonate cytidylyltransferase.